The sequence spans 395 residues: Tryptophan--tRNA ligase (395 aa).

Residues R8–T10 and G16–H17 contribute to the ATP site. The 'HIGH' region motif lies at P9–H17. The interval R117–L179 is insert. D204 serves as a coordination point for L-tryptophan. ATP-binding positions include G216 to D218, I254, and K261 to S265. A 'KMSKS' region motif is present at residues K261–S265.

It belongs to the class-I aminoacyl-tRNA synthetase family. Homodimer.

Its subcellular location is the cytoplasm. The catalysed reaction is tRNA(Trp) + L-tryptophan + ATP = L-tryptophyl-tRNA(Trp) + AMP + diphosphate + H(+). Catalyzes the attachment of tryptophan to tRNA(Trp). The polypeptide is Tryptophan--tRNA ligase (Aquifex aeolicus (strain VF5)).